Consider the following 409-residue polypeptide: MSSHPIQVFSEIGKLKKVMLHRPGKELENLLPDYLERLLFDDIPFLEDAQKEHDAFAQALRDEGIEVLYLEQLAAESLTSPEIRDQFIEEYLDEANIRDRQTKVAIRELLHGIKDNQELVEKTMAGIQKVELPEIPDEAKDLTDLVESEYPFAIDPMPNLYFTRDPFATIGNAVSLNHMFADTRNRETLYGKYIFKYHPIYGGKVDLVYNREEDTRIEGGDELVLSKDVLAVGISQRTDAASIEKLLVNIFKKNVGFKKVLAFEFANNRKFMHLDTVFTMVDYDKFTIHPEIEGDLHVYSVTYENEKLKIVEEKGDLAELLAQNLGVEKVHLIRCGGGNIVAAAREQWNDGSNTLTIAPGVVVVYDRNTVTNKILEEYGLRLIKIRGSELVRGRGGPRCMSMPFEREEV.

Cys399 acts as the Amidino-cysteine intermediate in catalysis.

It belongs to the arginine deiminase family.

Its subcellular location is the cytoplasm. It catalyses the reaction L-arginine + H2O = L-citrulline + NH4(+). Its pathway is amino-acid degradation; L-arginine degradation via ADI pathway; carbamoyl phosphate from L-arginine: step 1/2. The protein is Arginine deiminase of Streptococcus pneumoniae (strain P1031).